The chain runs to 435 residues: AMSH-like protease sst2 (435 aa).

The segment covering 162–181 (TDLLSPDSQKLSKSSSDLPQ) has biased composition (low complexity). The tract at residues 162–185 (TDLLSPDSQKLSKSSSDLPQFDYP) is disordered. Thr-192 bears the Phosphothreonine mark. The MPN domain occupies 262–392 (TIYLPKLLKK…FRLLDPEGLQ (131 aa)). Zn(2+) contacts are provided by His-341, His-343, Asp-354, His-356, Cys-397, His-404, and His-406. A JAMM motif motif is present at residues 341–354 (HTHPTQTCFMSSVD).

The protein belongs to the peptidase M67C family. Requires Zn(2+) as cofactor.

Its subcellular location is the cytoplasm. It localises to the endosome. Its function is as follows. Zinc metalloprotease that specifically cleaves 'Lys-63'-linked polyubiquitin chains. Does not cleave 'Lys-48'-linked polyubiquitin chains. Plays a role in the multivesicular body (MVB) sorting pathway. Required for ubiquitin-dependent sorting of proteins into the endosome and subsequent trafficking to the vacuole. May regulate MVB sorting through deubiquitination of ubiquitinated ESCRT proteins. The sequence is that of AMSH-like protease sst2 (sst2) from Schizosaccharomyces pombe (strain 972 / ATCC 24843) (Fission yeast).